The following is a 342-amino-acid chain: Uroporphyrinogen decarboxylase (342 aa).

Substrate-binding positions include 22–26 (RQAGR), F42, D72, Y146, S201, and H317.

It belongs to the uroporphyrinogen decarboxylase family. In terms of assembly, homodimer.

The protein localises to the cytoplasm. It catalyses the reaction uroporphyrinogen III + 4 H(+) = coproporphyrinogen III + 4 CO2. It functions in the pathway porphyrin-containing compound metabolism; protoporphyrin-IX biosynthesis; coproporphyrinogen-III from 5-aminolevulinate: step 4/4. Functionally, catalyzes the decarboxylation of four acetate groups of uroporphyrinogen-III to yield coproporphyrinogen-III. This is Uroporphyrinogen decarboxylase from Orientia tsutsugamushi (strain Ikeda) (Rickettsia tsutsugamushi).